Consider the following 194-residue polypeptide: Glycerol-3-phosphate acyltransferase (194 aa).

5 helical membrane-spanning segments follow: residues 3–23, 47–67, 78–97, 112–132, and 153–173; these read IALL…LIVG, VLGK…GVLP, IHGI…PIYL, ILGV…TLLF, and LFFD…LIII.

Belongs to the PlsY family. As to quaternary structure, probably interacts with PlsX.

It is found in the cell membrane. It catalyses the reaction an acyl phosphate + sn-glycerol 3-phosphate = a 1-acyl-sn-glycero-3-phosphate + phosphate. It functions in the pathway lipid metabolism; phospholipid metabolism. Its function is as follows. Catalyzes the transfer of an acyl group from acyl-phosphate (acyl-PO(4)) to glycerol-3-phosphate (G3P) to form lysophosphatidic acid (LPA). This enzyme utilizes acyl-phosphate as fatty acyl donor, but not acyl-CoA or acyl-ACP. This is Glycerol-3-phosphate acyltransferase from Macrococcus caseolyticus (strain JCSC5402) (Macrococcoides caseolyticum).